The sequence spans 362 residues: Solute carrier family 25 member 3 (362 aa).

A mitochondrion-targeting transit peptide spans 1–49; that stretch reads MFSSVAHLARANPFNTPHLQLVHDGLGDLRSSSPGPTGQPRRPRNLAAA. Over 50–63 the chain is Mitochondrial intermembrane; sequence AVEEQYSCDYGSGR. Solcar repeat units follow at residues 63-147, 160-244, and 261-339; these read RFFI…FKVL, WRTS…TVEA, and EQLV…VKVY. Residues 64-86 traverse the membrane as a helical segment; that stretch reads FFILCGLGGIISCGTTHTALVPL. Topologically, residues 87 to 121 are mitochondrial matrix; the sequence is DLVKCRMQVDPQKYKGIFNGFSVTLKEDGVRGLAK. Position 99 is an N6-acetyllysine (Lys99). An N6-methyllysine modification is found at Lys112. Residues 122–141 form a helical membrane-spanning segment; the sequence is GWAPTFLGYSMQGLCKFGFY. Residues 142-161 are Mitochondrial intermembrane-facing; that stretch reads EVFKVLYSNMLGEENTYLWR. The chain crosses the membrane as a helical span at residues 162–183; it reads TSLYLAASASAEFFADIALAPM. At 184-218 the chain is on the mitochondrial matrix side; that stretch reads EAAKVRIQTQPGYANTLRDAAPKMYKEEGLKAFYK. Residue Tyr196 is modified to Phosphotyrosine. Lys209 is subject to N6-acetyllysine. Residues 219–238 traverse the membrane as a helical segment; sequence GVAPLWMRQIPYTMMKFACF. At 239–261 the chain is on the mitochondrial intermembrane side; it reads ERTVEALYKFVVPKPRSECSKPE. A helical transmembrane segment spans residues 262–284; the sequence is QLVVTFVAGYIAGVFCAIVSHPA. At 285–314 the chain is on the mitochondrial matrix side; the sequence is DSVVSVLNKEKGSSASLVLKRLGFKGVWKG. Residues 315–333 traverse the membrane as a helical segment; the sequence is LFARIIMIGTLTALQWFIY. Residues 334 to 362 are Mitochondrial intermembrane-facing; it reads DSVKVYFRLPRPPPPEMPESLKKKLGLTQ.

The protein belongs to the mitochondrial carrier (TC 2.A.29) family. In terms of assembly, interacts with PPIF; the interaction is impaired by CsA.

It localises to the mitochondrion inner membrane. The catalysed reaction is phosphate(in) + H(+)(in) = phosphate(out) + H(+)(out). Functionally, inorganic ion transporter that transports phosphate or copper ions across the mitochondrial inner membrane into the matrix compartment. Mediates proton-coupled symport of phosphate ions necessary for mitochondrial oxidative phosphorylation of ADP to ATP. Transports copper ions probably in the form of anionic copper(I) complexes to maintain mitochondrial matrix copper pool and to supply copper for cytochrome C oxidase complex assembly. May also play a role in regulation of the mitochondrial permeability transition pore (mPTP). In Homo sapiens (Human), this protein is Solute carrier family 25 member 3.